The primary structure comprises 239 residues: Ribonuclease PH (239 aa).

Phosphate-binding positions include Arg-86 and 124–126 (GTR).

Belongs to the RNase PH family. Homohexameric ring arranged as a trimer of dimers.

It catalyses the reaction tRNA(n+1) + phosphate = tRNA(n) + a ribonucleoside 5'-diphosphate. Functionally, phosphorolytic 3'-5' exoribonuclease that plays an important role in tRNA 3'-end maturation. Removes nucleotide residues following the 3'-CCA terminus of tRNAs; can also add nucleotides to the ends of RNA molecules by using nucleoside diphosphates as substrates, but this may not be physiologically important. Probably plays a role in initiation of 16S rRNA degradation (leading to ribosome degradation) during starvation. This is Ribonuclease PH from Rickettsia akari (strain Hartford).